A 723-amino-acid chain; its full sequence is DNA-binding protein RFX2 (723 aa).

The interval M1 to M46 is disordered. Residues S10–A20 show a composition bias toward low complexity. Position 28 is a phosphoserine (S28). Positions H199–P274 form a DNA-binding region, RFX-type winged-helix. The interval Q292 to Q332 is disordered. Low complexity predominate over residues T307 to T322. Residues P323–Q332 show a composition bias toward polar residues. S416 carries the phosphoserine modification. The disordered stretch occupies residues G689–I723.

It belongs to the RFX family. Homodimer; probably only forms homodimers in testis. Heterodimer; heterodimerizes with RFX1 and RFX3.

The protein localises to the nucleus. Its subcellular location is the cytoplasm. Transcription factor that acts as a key regulator of spermatogenesis. Acts by regulating expression of genes required for the haploid phase during spermiogenesis, such as genes required for cilium assembly and function. Recognizes and binds the X-box, a regulatory motif with DNA sequence 5'-GTNRCC(0-3N)RGYAAC-3' present on promoters. Probably activates transcription of the testis-specific histone gene H1-6. This is DNA-binding protein RFX2 (RFX2) from Macaca fascicularis (Crab-eating macaque).